The sequence spans 376 residues: 1-acyl-sn-glycerol-3-phosphate acyltransferase gamma (376 aa).

At Met-1 to Arg-124 the chain is on the cytoplasmic side. The HXXXXD motif motif lies at His-96 to Asp-101. Residues Glu-125–Lys-145 traverse the membrane as a helical segment. The Lumenal portion of the chain corresponds to Arg-146–Thr-316. A helical transmembrane segment spans residues Ile-317–Leu-339. Residues Thr-340 to Glu-376 are Cytoplasmic-facing.

Belongs to the 1-acyl-sn-glycerol-3-phosphate acyltransferase family. As to expression, widely expressed. Mainly expressed in testis, kidney and liver (at protein level).

The protein resides in the endoplasmic reticulum membrane. Its subcellular location is the nucleus envelope. It carries out the reaction a 1-acyl-sn-glycero-3-phosphate + an acyl-CoA = a 1,2-diacyl-sn-glycero-3-phosphate + CoA. The catalysed reaction is pentadecanoyl-CoA + 1-(9Z-octadecenoyl)-sn-glycero-3-phosphate = 1-(9Z)-octadecenoyl-2-pentadecanoyl-sn-glycero-3-phosphate + CoA. The enzyme catalyses heptadecanoyl-CoA + 1-(9Z-octadecenoyl)-sn-glycero-3-phosphate = 1-(9Z)-octadecenoyl-2-heptadecanoyl-sn-glycero-3-phosphate + CoA. It catalyses the reaction 1-(9Z-octadecenoyl)-sn-glycero-3-phosphate + octadecanoyl-CoA = 1-(9Z-octadecenoyl)-2-octadecanoyl-sn-glycero-3-phosphate + CoA. It carries out the reaction nonadecanoyl-CoA + 1-(9Z-octadecenoyl)-sn-glycero-3-phosphate = 1-(9Z)-octadecenoyl-2-nonadecanoyl-sn-glycero-3-phosphate + CoA. The catalysed reaction is 1-(9Z-octadecenoyl)-sn-glycero-3-phosphate + (5Z,8Z,11Z,14Z)-eicosatetraenoyl-CoA = 1-(9Z)-octadecenoyl-2-(5Z,8Z,11Z,14Z)-eicosatetraenoyl-sn-glycero-3-phosphate + CoA. The enzyme catalyses 1-(9Z-octadecenoyl)-sn-glycero-3-phosphate + (9Z)-octadecenoyl-CoA = 1,2-di-(9Z-octadecenoyl)-sn-glycero-3-phosphate + CoA. It catalyses the reaction 1-(9Z-octadecenoyl)-sn-glycero-3-phosphate + (9Z,12Z)-octadecadienoyl-CoA = 1-(9Z)-octadecenoyl-2-(9Z,12Z)-octadecadienoyl-sn-glycero-3-phosphate + CoA. It carries out the reaction 1-(9Z-octadecenoyl)-sn-glycero-3-phosphocholine + (5Z,8Z,11Z,14Z)-eicosatetraenoyl-CoA = 1-(9Z)-octadecenoyl-2-(5Z,8Z,11Z,14Z)-icosatetraenoyl-sn-glycero-3-phosphocholine + CoA. The catalysed reaction is 1-(9Z-octadecenoyl)-sn-glycero-3-phospho-(1D-myo-inositol) + (5Z,8Z,11Z,14Z)-eicosatetraenoyl-CoA = 1-(9Z-octadecenoyl)-2-(5Z,8Z,11Z,14Z-eicosatetraenoyl)-sn-glycero-3-phospho-1D-myo-inositol + CoA. The enzyme catalyses 1-(9Z-octadecenoyl)-sn-glycero-3-phospho-L-serine + (5Z,8Z,11Z,14Z)-eicosatetraenoyl-CoA = 1-(9Z-octadecenoyl)-2-(5Z,8Z,11Z,14Z-eicosatetraenoyl)-sn-glycero-3-phospho-L-serine + CoA. It catalyses the reaction 1-hexadecanoyl-sn-glycero-3-phosphate + (9Z)-octadecenoyl-CoA = 1-hexadecanoyl-2-(9Z-octadecenoyl)-sn-glycero-3-phosphate + CoA. It carries out the reaction 1-hexadecanoyl-sn-glycero-3-phosphate + (5Z,8Z,11Z,14Z)-eicosatetraenoyl-CoA = 1-hexadecanoyl-2-(5Z,8Z,11Z,14Z-eicosatetraenoyl)-sn-glycero-3-phosphate + CoA. The catalysed reaction is 1-heptadecanoyl-sn-glycero-3-phosphate + (5Z,8Z,11Z,14Z)-eicosatetraenoyl-CoA = 1-heptadecanoyl-2-(5Z,8Z,11Z,14Z)-eicosatetraenoyl-sn-glycero-3-phosphate + CoA. The enzyme catalyses 1-octadecanoyl-sn-glycero-3-phosphate + (9Z)-octadecenoyl-CoA = 1-octadecanoyl-2-(9Z-octadecenoyl)-sn-glycero-3-phosphate + CoA. It catalyses the reaction 1-octadecanoyl-sn-glycero-3-phosphate + (5Z,8Z,11Z,14Z)-eicosatetraenoyl-CoA = 1-octadecanoyl-2-(5Z,8Z,11Z,14Z-eicosatetraenoyl)-sn-glycero-3-phosphate + CoA. It carries out the reaction 1-(9Z-octadecenoyl)-sn-glycero-3-phosphate + hexadecanoyl-CoA = 1-hexadecanoyl-2-(9Z-octadecenoyl)-sn-glycero-3-phosphate + CoA. The catalysed reaction is 1-O-(9Z-octadecenyl)-sn-glycero-3-phosphate + (5Z,8Z,11Z,14Z)-eicosatetraenoyl-CoA = 1-O-(9Z-octadecenyl)-2-(5Z,8Z,11Z,14Z-eicosatetraenoyl)-sn-glycero-3-phosphate + CoA. The enzyme catalyses a 1-acyl-sn-glycero-3-phospho-(1D-myo-inositol) + (5Z,8Z,11Z,14Z)-eicosatetraenoyl-CoA = a 1-acyl-2-(5Z,8Z,11Z,14Z-eicosatetraenoyl)-sn-glycero-3-phospho-(1D-myo-inositol) + CoA. It participates in phospholipid metabolism; CDP-diacylglycerol biosynthesis; CDP-diacylglycerol from sn-glycerol 3-phosphate: step 2/3. Its activity is regulated as follows. In males, activity increases in an age-dependent fashion, maybe derived from the induction by sex-hormones. Functionally, converts 1-acyl-sn-glycerol-3-phosphate (lysophosphatidic acid or LPA) into 1,2-diacyl-sn-glycerol-3-phosphate (phosphatidic acid or PA) by incorporating an acyl moiety at the sn-2 position of the glycerol backbone. Acts on LPA containing saturated or unsaturated fatty acids C16:0-C20:4 at the sn-1 position using C18:1, C20:4 or C18:2-CoA as the acyl donor. Also acts on lysophosphatidylcholine, lysophosphatidylinositol and lysophosphatidylserine using C18:1 or C20:4-CoA. Has a preference for arachidonoyl-CoA as a donor. Also has a modest lysophosphatidylinositol acyltransferase (LPIAT) activity, converts lysophosphatidylinositol (LPI) into phosphatidylinositol. This is 1-acyl-sn-glycerol-3-phosphate acyltransferase gamma from Mus musculus (Mouse).